Consider the following 492-residue polypeptide: Spindle assembly abnormal protein 6 (492 aa).

The region spanning 46–98 (SGEKELKFEISRSDDFEFLFSETLNNEKYQILARDHDLTVDFDAFPKVIIQHL) is the PISA domain. Residues 192-407 (KSADELASLR…KIAHYRAQRF (216 aa)) adopt a coiled-coil conformation.

Nine homodimers form a cartwheel structure with an internal diameter of 23 nM and radial spokes connecting to the microtubule triplets. Interacts with sas-5.

The protein resides in the cytoplasm. The protein localises to the cytoskeleton. It is found in the microtubule organizing center. Its subcellular location is the centrosome. It localises to the centriole. In terms of biological role, central scaffolding component of the centrioles ensuring their 9-fold symmetry. Required for centrosome biogenesis and duplication. In Caenorhabditis elegans, this protein is Spindle assembly abnormal protein 6.